We begin with the raw amino-acid sequence, 367 residues long: Flagellar P-ring protein (367 aa).

An N-terminal signal peptide occupies residues 1-21 (MYVFKALAGIVLALVATLAHA).

It belongs to the FlgI family. In terms of assembly, the basal body constitutes a major portion of the flagellar organelle and consists of four rings (L,P,S, and M) mounted on a central rod.

Its subcellular location is the periplasm. The protein localises to the bacterial flagellum basal body. In terms of biological role, assembles around the rod to form the L-ring and probably protects the motor/basal body from shearing forces during rotation. This Salmonella paratyphi C (strain RKS4594) protein is Flagellar P-ring protein.